An 87-amino-acid polypeptide reads, in one-letter code: Small ribosomal subunit protein bS20 (87 aa).

The span at 1 to 11 (MANIKSKKKRI) shows a compositional bias: basic residues. A disordered region spans residues 1-25 (MANIKSKKKRIKTNEKARQRNKAIR).

The protein belongs to the bacterial ribosomal protein bS20 family.

Binds directly to 16S ribosomal RNA. The polypeptide is Small ribosomal subunit protein bS20 (Corynebacterium kroppenstedtii (strain DSM 44385 / JCM 11950 / CIP 105744 / CCUG 35717)).